Reading from the N-terminus, the 267-residue chain is tRNA pseudouridine synthase A (267 aa).

The Nucleophile role is filled by aspartate 51. Tyrosine 109 provides a ligand contact to substrate.

It belongs to the tRNA pseudouridine synthase TruA family. In terms of assembly, homodimer.

The enzyme catalyses uridine(38/39/40) in tRNA = pseudouridine(38/39/40) in tRNA. Its function is as follows. Formation of pseudouridine at positions 38, 39 and 40 in the anticodon stem and loop of transfer RNAs. This Staphylococcus aureus (strain MSSA476) protein is tRNA pseudouridine synthase A.